Reading from the N-terminus, the 813-residue chain is Leucine--tRNA ligase (813 aa).

The 'HIGH' region signature appears at Pro-42–His-52. A 'KMSKS' region motif is present at residues Lys-580–Ser-584. Position 583 (Lys-583) interacts with ATP.

This sequence belongs to the class-I aminoacyl-tRNA synthetase family.

The protein resides in the cytoplasm. The catalysed reaction is tRNA(Leu) + L-leucine + ATP = L-leucyl-tRNA(Leu) + AMP + diphosphate. This chain is Leucine--tRNA ligase, found in Dehalococcoides mccartyi (strain CBDB1).